Reading from the N-terminus, the 485-residue chain is Peptidyl-prolyl cis-trans isomerase-like 4 (485 aa).

One can recognise a PPIase cyclophilin-type domain in the interval 1-172 (MSVLLETSAG…IDIRIKHTVI (172 aa)). Residues 251–329 (NVLFVCKLNP…RRIHVDFSQS (79 aa)) form the RRM domain. Residues 377-485 (NYRMVYGEEE…RDENDRRSRR (109 aa)) are disordered. Residues 426–485 (RPRDRSRDRYHKPRDDRRGDRRDRDRRDQDRNRYRDRDHRDRGREKDRYGRDENDRRSRR) show a composition bias toward basic and acidic residues.

It belongs to the cyclophilin-type PPIase family. PPIL4 subfamily.

The protein localises to the nucleus. It carries out the reaction [protein]-peptidylproline (omega=180) = [protein]-peptidylproline (omega=0). PPIases accelerate the folding of proteins. It catalyzes the cis-trans isomerization of proline imidic peptide bonds in oligopeptides. The polypeptide is Peptidyl-prolyl cis-trans isomerase-like 4 (CYP6) (Gibberella zeae (strain ATCC MYA-4620 / CBS 123657 / FGSC 9075 / NRRL 31084 / PH-1) (Wheat head blight fungus)).